The primary structure comprises 911 residues: Gag-Pro polyprotein (911 aa).

Positions 101 to 161 are excised as a propeptide; that stretch reads AAVAQTEEIL…TKKPKRFPVL (61 aa). 2 stretches are compositionally biased toward polar residues: residues 113-125 and 140-152; these read NSQT…SQNP and KSSS…LSST. Positions 113–178 are disordered; that stretch reads NSQTDLTKTS…DPEDPNPSEV (66 aa). Residues 202-205 carry the PPXY motif motif; it reads PPPY. Positions 210–213 match the PTAP/PSAP motif motif; the sequence is PSAP. Residues 216-257 adopt a coiled-coil conformation; that stretch reads MAVVNPKEELKEKIAQLEEQIKLEELHQALISKLQKLKTGNE. The disordered stretch occupies residues 260–279; sequence THPDTAGGLSRTPHWPGQHI. 2 consecutive CCHC-type zinc fingers follow at residues 547-564 and 576-593; these read GCCF…NCHE and GLCP…ECKS. A disordered region spans residues 592 to 626; that stretch reads KSKTDNQGNPIPPHQGNRVEGPAPGPETSLWGSQL. A Peptidase A2 domain is found at 780–856; it reads FTGLIDTGAD…LPVNLWGRDL (77 aa). D785 serves as the catalytic Protease; shared with dimeric partner. The G-patch domain occupies 867-911; it reads PNDIVTAQMLAQGYSPGKGLGKKENGILHPIPNQGQSNKKGFGNF.

Homodimer. In terms of assembly, interacts with the reverse transcriptase/ribonuclease H. As to quaternary structure, homotrimer. Released by autocatalytic processing. The protease can undergo further autoprocessing to yield 2 shorter but enzymatically active forms of 12 kDa and 13 kDa without the GDP domain. the 12 kDa form is monomeric. Post-translationally, myristoylated. Myristoylation of the matrix (MA) domain mediates the transport and binding of Gag polyproteins to the host plasma membrane and is required for the assembly of viral particles. In terms of processing, specific enzymatic cleavages in vivo yield mature proteins.

It localises to the virion. It carries out the reaction dUTP + H2O = dUMP + diphosphate + H(+). In terms of biological role, matrix protein. Its function is as follows. Nucleocapsid protein p14: Nucleocapsid protein. Functionally, capsid protein. The aspartyl protease mediates proteolytic cleavages of Gag and Gag-Pol polyproteins during or shortly after the release of the virion from the plasma membrane. Cleavages take place as an ordered, step-wise cascade to yield mature proteins. This process is called maturation. Displays maximal activity during the budding process just prior to particle release from the cell. In terms of biological role, enhances the activity of the reverse transcriptase. May be part of the mature RT. In Mason-Pfizer monkey virus (MPMV), this protein is Gag-Pro polyprotein (gag-pro).